Consider the following 50-residue polypeptide: Sperm protamine P1 (50 aa).

The protein belongs to the protamine P1 family. As to quaternary structure, cross-linked by interchain disulfide bonds around the DNA-helix. In terms of tissue distribution, testis.

It localises to the nucleus. It is found in the chromosome. Functionally, protamines substitute for histones in the chromatin of sperm during the haploid phase of spermatogenesis. They compact sperm DNA into a highly condensed, stable and inactive complex. The chain is Sperm protamine P1 (PRM1) from Saguinus imperator (Emperor tamarin).